A 625-amino-acid chain; its full sequence is tRNA uridine 5-carboxymethylaminomethyl modification enzyme MnmG (625 aa).

FAD-binding positions include 11–16 (GAGHAG), Val-123, and Ser-178. 271 to 285 (GPRYCPSIETKIVTF) lines the NAD(+) pocket. Gln-368 is a binding site for FAD.

The protein belongs to the MnmG family. As to quaternary structure, homodimer. Heterotetramer of two MnmE and two MnmG subunits. The cofactor is FAD.

The protein resides in the cytoplasm. In terms of biological role, NAD-binding protein involved in the addition of a carboxymethylaminomethyl (cmnm) group at the wobble position (U34) of certain tRNAs, forming tRNA-cmnm(5)s(2)U34. This Bacteroides fragilis (strain ATCC 25285 / DSM 2151 / CCUG 4856 / JCM 11019 / LMG 10263 / NCTC 9343 / Onslow / VPI 2553 / EN-2) protein is tRNA uridine 5-carboxymethylaminomethyl modification enzyme MnmG.